A 243-amino-acid chain; its full sequence is Phosphoribosyl isomerase A (243 aa).

Residue D10 is the Proton acceptor of the active site. D129 (proton donor) is an active-site residue.

This sequence belongs to the HisA/HisF family.

Its subcellular location is the cytoplasm. It catalyses the reaction 1-(5-phospho-beta-D-ribosyl)-5-[(5-phospho-beta-D-ribosylamino)methylideneamino]imidazole-4-carboxamide = 5-[(5-phospho-1-deoxy-D-ribulos-1-ylimino)methylamino]-1-(5-phospho-beta-D-ribosyl)imidazole-4-carboxamide. The catalysed reaction is N-(5-phospho-beta-D-ribosyl)anthranilate = 1-(2-carboxyphenylamino)-1-deoxy-D-ribulose 5-phosphate. Its pathway is amino-acid biosynthesis; L-histidine biosynthesis; L-histidine from 5-phospho-alpha-D-ribose 1-diphosphate: step 4/9. It participates in amino-acid biosynthesis; L-tryptophan biosynthesis; L-tryptophan from chorismate: step 3/5. Involved in both the histidine and tryptophan biosynthetic pathways. The protein is Phosphoribosyl isomerase A of Mycobacteroides abscessus (strain ATCC 19977 / DSM 44196 / CCUG 20993 / CIP 104536 / JCM 13569 / NCTC 13031 / TMC 1543 / L948) (Mycobacterium abscessus).